Consider the following 264-residue polypeptide: Sulfur carrier protein FdhD (264 aa).

Catalysis depends on C107, which acts as the Cysteine persulfide intermediate.

This sequence belongs to the FdhD family.

The protein resides in the cytoplasm. In terms of biological role, required for formate dehydrogenase (FDH) activity. Acts as a sulfur carrier protein that transfers sulfur from IscS to the molybdenum cofactor prior to its insertion into FDH. This is Sulfur carrier protein FdhD from Staphylococcus haemolyticus (strain JCSC1435).